Consider the following 465-residue polypeptide: VGFKAGVKDYKLTYYTPEYETKDTDILAAFRVTPQPGVPPEEAGAAVAAESSTGTWTTVWTDGLTSLDRYKGRCYHIEPVAGEESQXIAYVAYPLDLFEEGSVTNMFTSIVGNVFGFKALRALRLEDLRIPPAYSKTFQGPPHGIQVERDKLNKYGRPLLGCTIKPKLGLSAKNYGRAVYECLRGGLDFTKDDENVNSQPFMRWRDRFLFCAEAIYKAQAETGEIKGHYLNATAGTCEEMIKRAVFARELGVPIVMHDYLTGGFTANTTLAHYCRDNGLLLHIHRAMHAVIDRQKNHGMHFRVLAKALRMSGGDHIHAGTVVGKLEGEREITLGFVDLLRDDFIEKDRSRGIYFTQDWVSLPGVLPVASGGIHVWHMPALTEIFGDDSVLQFGGGTLGHPWGNAPGAVANRVALEACVQARNEGRDLAREGNEIIREASKWSPELAAACEVWKEIKFEFEAMDTL.

Residue K4 is modified to N6,N6,N6-trimethyllysine. Substrate is bound by residues N113 and T163. K165 functions as the Proton acceptor in the catalytic mechanism. K167 is a substrate binding site. Residues K191, D193, and E194 each coordinate Mg(2+). K191 is modified (N6-carboxylysine). The active-site Proton acceptor is H284. Substrate-binding residues include R285, H317, and S369.

The protein belongs to the RuBisCO large chain family. Type I subfamily. As to quaternary structure, heterohexadecamer of 8 large chains and 8 small chains; disulfide-linked. The disulfide link is formed within the large subunit homodimers. It depends on Mg(2+) as a cofactor. The disulfide bond which can form in the large chain dimeric partners within the hexadecamer appears to be associated with oxidative stress and protein turnover.

The protein localises to the plastid. It is found in the chloroplast. The enzyme catalyses 2 (2R)-3-phosphoglycerate + 2 H(+) = D-ribulose 1,5-bisphosphate + CO2 + H2O. It carries out the reaction D-ribulose 1,5-bisphosphate + O2 = 2-phosphoglycolate + (2R)-3-phosphoglycerate + 2 H(+). Functionally, ruBisCO catalyzes two reactions: the carboxylation of D-ribulose 1,5-bisphosphate, the primary event in carbon dioxide fixation, as well as the oxidative fragmentation of the pentose substrate in the photorespiration process. Both reactions occur simultaneously and in competition at the same active site. This Hamamelis mollis (Chinese witch hazel) protein is Ribulose bisphosphate carboxylase large chain.